The following is a 258-amino-acid chain: Small ribosomal subunit protein uS2 (258 aa).

The interval 234-258 (ETANAEEAMQKAAAVEAAAEAAPAQ) is disordered. Residues 236 to 258 (ANAEEAMQKAAAVEAAAEAAPAQ) are compositionally biased toward low complexity.

Belongs to the universal ribosomal protein uS2 family.

The chain is Small ribosomal subunit protein uS2 from Desulfovibrio desulfuricans (strain ATCC 27774 / DSM 6949 / MB).